A 375-amino-acid chain; its full sequence is MANASEPGGSGGGEAAALGLKLATLSLLLCVSLAGNVLFALLIVRERSLHRAPYYLLLDLCLADGLRALACLPAVMLAARRAAAAAGAPPGALGCKLLAFLAALFCFHAAFLLLGVGVTRYLAIAHHRFYAERLAGWPCAAMLVCAAWALALAAAFPPVLDGGGDDEDAPCALEQRPDGAPGALGFLLLLAVVVGATHLVYLRLLFFIHDRRKMRPARLVPAVSHDWTFHGPGATGQAAANWTAGFGRGPTPPALVGIRPAGPGRGARRLLVLEEFKTEKRLCKMFYAVTLLFLLLWGPYVVASYLRVLVRPGAVPQAYLTASVWLTFAQAGINPVVCFLFNRELRDCFRAQFPCCQSPRTTQATHPCDLKGIGL.

The Extracellular portion of the chain corresponds to Met-1 to Ala-23. Asn-3 carries N-linked (GlcNAc...) asparagine glycosylation. A helical membrane pass occupies residues Thr-24 to Val-44. The Cytoplasmic portion of the chain corresponds to Arg-45–Tyr-55. Residues Leu-56 to Met-76 traverse the membrane as a helical segment. The Extracellular segment spans residues Leu-77–Leu-97. A disulfide bridge links Cys-95 with Cys-171. A helical membrane pass occupies residues Leu-98–Val-118. The Cytoplasmic segment spans residues Thr-119 to Cys-139. Residues Ala-140 to Leu-160 traverse the membrane as a helical segment. The Extracellular segment spans residues Asp-161–Pro-181. Residues Gly-182–Leu-202 form a helical membrane-spanning segment. Over Arg-203–Met-285 the chain is Cytoplasmic. Residues Phe-286–Leu-306 form a helical membrane-spanning segment. Topologically, residues Arg-307–Leu-320 are extracellular. Residues Thr-321 to Phe-341 traverse the membrane as a helical segment. Residues Asn-342–Leu-375 lie on the Cytoplasmic side of the membrane.

It belongs to the G-protein coupled receptor 1 family. In terms of tissue distribution, highly expressed as a 3.0 kb transcript in brain, ovary, testis, heart, prostate and peripheral Leukocytes. Lower levels in pancreas and small intestine. A 2.3 kb transcript was also found in peripheral Leukocytes. In brain regions, detected as a 3.0 kb transcript in all regions tested. Highest levels in the caudate nucleus, putamen, hippocampus and subthalamic nucleus. Lowest level in the cerebellum.

The protein resides in the cell membrane. In terms of biological role, orphan receptor. Possible candidate for amine-like G-protein coupled receptor. This is Probable G-protein coupled receptor 27 (GPR27) from Homo sapiens (Human).